Consider the following 430-residue polypeptide: Serine--tRNA ligase (430 aa).

235–237 (TAE) serves as a coordination point for L-serine. ATP-binding positions include 266–268 (RRE) and V282. An L-serine-binding site is contributed by E289. Position 353-356 (353-356 (EASS)) interacts with ATP. Residue S389 participates in L-serine binding.

The protein belongs to the class-II aminoacyl-tRNA synthetase family. Type-1 seryl-tRNA synthetase subfamily. Homodimer. The tRNA molecule binds across the dimer.

Its subcellular location is the cytoplasm. The enzyme catalyses tRNA(Ser) + L-serine + ATP = L-seryl-tRNA(Ser) + AMP + diphosphate + H(+). The catalysed reaction is tRNA(Sec) + L-serine + ATP = L-seryl-tRNA(Sec) + AMP + diphosphate + H(+). The protein operates within aminoacyl-tRNA biosynthesis; selenocysteinyl-tRNA(Sec) biosynthesis; L-seryl-tRNA(Sec) from L-serine and tRNA(Sec): step 1/1. Functionally, catalyzes the attachment of serine to tRNA(Ser). Is also able to aminoacylate tRNA(Sec) with serine, to form the misacylated tRNA L-seryl-tRNA(Sec), which will be further converted into selenocysteinyl-tRNA(Sec). The chain is Serine--tRNA ligase from Chlorobium luteolum (strain DSM 273 / BCRC 81028 / 2530) (Pelodictyon luteolum).